Consider the following 147-residue polypeptide: UPF0178 protein VS_2364 (147 aa).

The protein belongs to the UPF0178 family.

The sequence is that of UPF0178 protein VS_2364 from Vibrio atlanticus (strain LGP32) (Vibrio splendidus (strain Mel32)).